The sequence spans 162 residues: MRLDSAAKALFLKEFVGAFALSMRYFFKPRPTLNYPHEKNPQSPRYRGEHALRRYPNGEERCIACKLCEAICPAKAITIEAGPRRNDGTRRTTRYDIDMVKCIYCGFCQEACPVDAIVEGPNAEFAVETREELYYDKDRLLQNGARWEREIARNIALDAPYR.

4Fe-4S ferredoxin-type domains lie at 52–82 and 93–122; these read LRRY…IEAG and TRYD…EGPN. Residues Cys62, Cys65, Cys68, Cys72, Cys102, Cys105, Cys108, and Cys112 each coordinate [4Fe-4S] cluster.

Belongs to the complex I 23 kDa subunit family. NDH-1 is composed of 14 different subunits. Subunits NuoA, H, J, K, L, M, N constitute the membrane sector of the complex. It depends on [4Fe-4S] cluster as a cofactor.

The protein resides in the cell inner membrane. It carries out the reaction a quinone + NADH + 5 H(+)(in) = a quinol + NAD(+) + 4 H(+)(out). In terms of biological role, NDH-1 shuttles electrons from NADH, via FMN and iron-sulfur (Fe-S) centers, to quinones in the respiratory chain. The immediate electron acceptor for the enzyme in this species is believed to be ubiquinone. Couples the redox reaction to proton translocation (for every two electrons transferred, four hydrogen ions are translocated across the cytoplasmic membrane), and thus conserves the redox energy in a proton gradient. This Beijerinckia indica subsp. indica (strain ATCC 9039 / DSM 1715 / NCIMB 8712) protein is NADH-quinone oxidoreductase subunit I.